The chain runs to 233 residues: Transcriptional regulatory protein PrrA (233 aa).

The 115-residue stretch at Arg9–Leu123 folds into the Response regulatory domain. Asp58 bears the 4-aspartylphosphate mark. Positions Ser134–Met232 form a DNA-binding region, ompR/PhoB-type.

Phosphorylated by PrrB at Asp-58.

The protein localises to the cytoplasm. Its function is as follows. Member of the two-component regulatory system PrrB/PrrA that is involved specifically in early intracellular multiplication of Mycobacterium and is essential for its viability. Upon phosphorylation by PrrB, functions as a transcription regulator by direct binding to promoter regions of target genes to positively regulate their expression. Autoregulates its own expression. The sequence is that of Transcriptional regulatory protein PrrA (prrA) from Mycobacterium bovis (strain ATCC BAA-935 / AF2122/97).